The primary structure comprises 235 residues: Transcriptional regulatory protein CseB (235 aa).

Residues 6 to 119 form the Response regulatory domain; it reads HVLFVEDDDV…VLVARIRAVL (114 aa). Aspartate 55 is subject to 4-aspartylphosphate. The segment at residues 141–235 is a DNA-binding region (ompR/PhoB-type); that stretch reads GGVLTFGELE…VRGFGYKLKA (95 aa).

In terms of processing, phosphorylated by CseC.

It localises to the cytoplasm. Functionally, member of the two-component regulatory system CseB/CseC involved in the stability of the cell envelope. CseB activates transcription of RNA polymerase sigma-E factor, in response to changes in the cell envelope. In Streptomyces avermitilis (strain ATCC 31267 / DSM 46492 / JCM 5070 / NBRC 14893 / NCIMB 12804 / NRRL 8165 / MA-4680), this protein is Transcriptional regulatory protein CseB (cseB).